The sequence spans 216 residues: MKIVLLGPPGAGKGTQAKSISNRYSIPHISTGDIFRKNISENTPLGIEAKSYMDNGQLVPDEVTINMVKDRLQQDDCKNGYLLDGFPRTVHQAEALDNFLTEREESIDTALLIEVPKEFILERMTGRRVCPSCGASYHIKFNPPTNDGKCDLCGSDVIQRKDDTEETVKERLDVYENQTQPLIDFYKNKKQLSVVDGTQAINEVFESICKILGSDK.

10–15 (GAGKGT) contributes to the ATP binding site. An NMP region spans residues 30–59 (STGDIFRKNISENTPLGIEAKSYMDNGQLV). Residues threonine 31, arginine 36, 57 to 59 (QLV), 85 to 88 (GFPR), and glutamine 92 each bind AMP. An LID region spans residues 126–163 (GRRVCPSCGASYHIKFNPPTNDGKCDLCGSDVIQRKDD). An ATP-binding site is contributed by arginine 127. Zn(2+) contacts are provided by cysteine 130 and cysteine 133. Position 136–137 (136–137 (SY)) interacts with ATP. Residues cysteine 150 and cysteine 153 each coordinate Zn(2+). Residues arginine 160 and arginine 171 each contribute to the AMP site. Glutamine 199 contacts ATP.

Belongs to the adenylate kinase family. In terms of assembly, monomer.

It localises to the cytoplasm. It catalyses the reaction AMP + ATP = 2 ADP. It participates in purine metabolism; AMP biosynthesis via salvage pathway; AMP from ADP: step 1/1. Functionally, catalyzes the reversible transfer of the terminal phosphate group between ATP and AMP. Plays an important role in cellular energy homeostasis and in adenine nucleotide metabolism. The polypeptide is Adenylate kinase (Clostridium perfringens (strain ATCC 13124 / DSM 756 / JCM 1290 / NCIMB 6125 / NCTC 8237 / Type A)).